We begin with the raw amino-acid sequence, 110 residues long: Insulin (110 aa).

The N-terminal stretch at 1–24 is a signal peptide; it reads MALWMRLLPLLVLLALWGPDPASA. 3 cysteine pairs are disulfide-bonded: C31–C96, C43–C109, and C95–C100. Positions 57-87 are cleaved as a propeptide — c peptide; the sequence is EAEDLQVGQVELGGGPGAGSLQPLALEGSLQ.

It belongs to the insulin family. Heterodimer of a B chain and an A chain linked by two disulfide bonds.

Its subcellular location is the secreted. Insulin decreases blood glucose concentration. It increases cell permeability to monosaccharides, amino acids and fatty acids. It accelerates glycolysis, the pentose phosphate cycle, and glycogen synthesis in liver. The polypeptide is Insulin (INS) (Pan troglodytes (Chimpanzee)).